We begin with the raw amino-acid sequence, 457 residues long: Adenylosuccinate synthetase isozyme 1 (457 aa).

The tract at residues 1-25 is disordered; that stretch reads MSGTRASNDRPPSAGGVKRGRLQHE. Residues 42–48 and 70–72 contribute to the GTP site; these read GDEGKGK and GHT. D43 functions as the Proton acceptor in the catalytic mechanism. Positions 43 and 70 each coordinate Mg(2+). D43 is a substrate binding site. Residues 43–46, 68–71, T163, R177, N256, T271, and R335 each bind IMP; these read DEGK and NAGH. The active-site Proton donor is the H71. Substrate is bound at residue 331 to 337; that stretch reads VTTGRKR. Residues R337, 363–365, and 445–448 each bind GTP; these read KLD and GVGK.

The protein belongs to the adenylosuccinate synthetase family. As to quaternary structure, homodimer. The cofactor is Mg(2+).

The protein localises to the cytoplasm. It catalyses the reaction IMP + L-aspartate + GTP = N(6)-(1,2-dicarboxyethyl)-AMP + GDP + phosphate + 2 H(+). Its pathway is purine metabolism; AMP biosynthesis via de novo pathway; AMP from IMP: step 1/2. Its function is as follows. Component of the purine nucleotide cycle (PNC), which interconverts IMP and AMP to regulate the nucleotide levels in various tissues, and which contributes to glycolysis and ammoniagenesis. Catalyzes the first committed step in the biosynthesis of AMP from IMP. This is Adenylosuccinate synthetase isozyme 1 from Bos taurus (Bovine).